Consider the following 461-residue polypeptide: GTPase Era, mitochondrial (461 aa).

The N-terminal 35 residues, 1–35 (MAAPWLQRWRGAYAGPSGPLRLVRLHGVQRSSWRA), are a transit peptide targeting the mitochondrion. Residues 39–73 (AAGAFGAGPHPGPPQRAANPGPGPHPPPVATSREK) are disordered. Residues 89 to 354 (KVLRISIIGA…QYLLMQAKPG (266 aa)) enclose the Era-type G domain. The G1 stretch occupies residues 97-104 (GAPNSGKS). A GTP-binding site is contributed by 97–104 (GAPNSGKS). The interval 123 to 127 (HTTRC) is G2. The segment at 144-147 (DTPG) is G3. GTP is bound by residues 144–148 (DTPGL) and 213–216 (NKVD). The interval 213–216 (NKVD) is G4. Residues 260 to 319 (KVTQTPPPENRARESPCQLETDKAQEGSSLDNSSDVKASESSLDTEAREQKPYKYGDQKN) are disordered. Residues 269–284 (NRARESPCQLETDKAQ) are compositionally biased toward basic and acidic residues. Over residues 285–303 (EGSSLDNSSDVKASESSLD) the composition is skewed to polar residues. The span at 304–319 (TEAREQKPYKYGDQKN) shows a compositional bias: basic and acidic residues. The segment at 332 to 334 (LAA) is G5. The 82-residue stretch at 380 to 461 (ILEYLPLEVP…RLKLKVEVKS (82 aa)) folds into the KH type-2 domain.

Belongs to the TRAFAC class TrmE-Era-EngA-EngB-Septin-like GTPase superfamily. Era GTPase family.

Its subcellular location is the mitochondrion matrix. The protein resides in the mitochondrion inner membrane. Its function is as follows. Probable GTPase that plays a role in the mitochondrial ribosomal small subunit assembly. Specifically binds the 12S mitochondrial rRNA (12S mt-rRNA) to a 33 nucleotide section delineating the 3' terminal stem-loop region. May act as a chaperone that protects the 12S mt-rRNA on the 28S mitoribosomal subunit during ribosomal small subunit assembly. The polypeptide is GTPase Era, mitochondrial (ERAL1) (Gallus gallus (Chicken)).